The following is a 243-amino-acid chain: Cell division protein ZipA (243 aa).

Over 1-4 (MSDM) the chain is Periplasmic. A helical transmembrane segment spans residues 5 to 25 (AMIRIGILIAGLLLVAAIFLF). Residues 26–243 (GRPKKSPQGR…APPLTKSPRW (218 aa)) lie on the Cytoplasmic side of the membrane. Residues 30–89 (KSPQGRRVDKDEGQPRERREPVISSEFGVEDDAAERAEGVEQSELNLEGQDASGGNEVGK) are disordered. The segment covering 35-50 (RRVDKDEGQPRERREP) has biased composition (basic and acidic residues).

This sequence belongs to the ZipA family. Interacts with FtsZ via their C-terminal domains.

The protein resides in the cell inner membrane. Functionally, essential cell division protein that stabilizes the FtsZ protofilaments by cross-linking them and that serves as a cytoplasmic membrane anchor for the Z ring. Also required for the recruitment to the septal ring of downstream cell division proteins. This chain is Cell division protein ZipA, found in Xanthomonas euvesicatoria pv. vesicatoria (strain 85-10) (Xanthomonas campestris pv. vesicatoria).